The following is a 156-amino-acid chain: Small ribosomal subunit protein uS7 (156 aa).

Belongs to the universal ribosomal protein uS7 family. In terms of assembly, part of the 30S ribosomal subunit. Contacts proteins S9 and S11.

Its function is as follows. One of the primary rRNA binding proteins, it binds directly to 16S rRNA where it nucleates assembly of the head domain of the 30S subunit. Is located at the subunit interface close to the decoding center, probably blocks exit of the E-site tRNA. This is Small ribosomal subunit protein uS7 from Novosphingobium aromaticivorans (strain ATCC 700278 / DSM 12444 / CCUG 56034 / CIP 105152 / NBRC 16084 / F199).